Consider the following 706-residue polypeptide: Elongation factor G (706 aa).

The region spanning 8–297 (SYVRNIGIGA…AVVDYLPSPN (290 aa)) is the tr-type G domain. Residues 17–24 (AHIDAGKT), 95–99 (DTPGH), and 149–152 (NKMD) contribute to the GTP site.

This sequence belongs to the TRAFAC class translation factor GTPase superfamily. Classic translation factor GTPase family. EF-G/EF-2 subfamily.

It is found in the cytoplasm. Catalyzes the GTP-dependent ribosomal translocation step during translation elongation. During this step, the ribosome changes from the pre-translocational (PRE) to the post-translocational (POST) state as the newly formed A-site-bound peptidyl-tRNA and P-site-bound deacylated tRNA move to the P and E sites, respectively. Catalyzes the coordinated movement of the two tRNA molecules, the mRNA and conformational changes in the ribosome. The polypeptide is Elongation factor G (Orientia tsutsugamushi (strain Ikeda) (Rickettsia tsutsugamushi)).